The chain runs to 547 residues: Chaperonin GroEL (547 aa).

ATP contacts are provided by residues 30-33 (TLGP), K51, 87-91 (DGTTT), G415, 479-481 (NAA), and D495.

This sequence belongs to the chaperonin (HSP60) family. Forms a cylinder of 14 subunits composed of two heptameric rings stacked back-to-back. Interacts with the co-chaperonin GroES.

The protein localises to the cytoplasm. The enzyme catalyses ATP + H2O + a folded polypeptide = ADP + phosphate + an unfolded polypeptide.. In terms of biological role, together with its co-chaperonin GroES, plays an essential role in assisting protein folding. The GroEL-GroES system forms a nano-cage that allows encapsulation of the non-native substrate proteins and provides a physical environment optimized to promote and accelerate protein folding. The protein is Chaperonin GroEL of Bordetella bronchiseptica (strain ATCC BAA-588 / NCTC 13252 / RB50) (Alcaligenes bronchisepticus).